The following is a 241-amino-acid chain: uncharacterized protein (241 aa).

One can recognise an HTH cro/C1-type domain in the interval 32–86; the sequence is LKKWRNLFNIQQIELAKYLNVSPSVISDYEVGRRKNPGVNIIKKYVLALIEIDKE. Positions 43–62 form a DNA-binding region, H-T-H motif; that stretch reads QIELAKYLNVSPSVISDYEV.

This is an uncharacterized protein from Methanocaldococcus jannaschii (strain ATCC 43067 / DSM 2661 / JAL-1 / JCM 10045 / NBRC 100440) (Methanococcus jannaschii).